Consider the following 256-residue polypeptide: Signal peptidase I (256 aa).

Residues serine 32 and lysine 75 contribute to the active site.

This sequence belongs to the peptidase S26 family.

The catalysed reaction is Cleavage of hydrophobic, N-terminal signal or leader sequences from secreted and periplasmic proteins.. The polypeptide is Signal peptidase I (lepB) (Aquifex aeolicus (strain VF5)).